The chain runs to 394 residues: Monoterpene synthase FDS-5, chloroplastic (394 aa).

Residues 1–65 constitute a chloroplast transit peptide; the sequence is MASFISLSSK…NLNSQFMQVY (65 aa). Residues K100, R103, and Q138 each contribute to the isopentenyl diphosphate site. 2 residues coordinate Mg(2+): D145 and D149. Residues 145–149 carry the DDXXD motif motif; it reads DDMMD. R154 provides a ligand contact to dimethylallyl diphosphate. R155 contacts isopentenyl diphosphate. Dimethylallyl diphosphate is bound by residues K242, Q281, K298, and K307.

The protein belongs to the FPP/GGPP synthase family. Mg(2+) is required as a cofactor. Mn(2+) serves as cofactor.

It is found in the plastid. The protein resides in the chloroplast. The catalysed reaction is isopentenyl diphosphate + dimethylallyl diphosphate = (2E)-geranyl diphosphate + diphosphate. It carries out the reaction 2 dimethylallyl diphosphate = (R,R)-chrysanthemyl diphosphate + diphosphate. The enzyme catalyses 2 dimethylallyl diphosphate = (R)-lavandulyl diphosphate + diphosphate. In terms of biological role, condenses two molecules of dimethylallyl diphosphate (DMAPP) to produce mainly an irregular monoterpene, chrysanthemyl diphosphate (CPP) and lower amounts of a branched monoterpene, lavandulyl diphosphate (LPP). CPP is a precursor of the pyrethrin insecticides. When incubated with isopentenyl diphosphate (IPP) and DMAPP, catalyzes three competing isoprenoid condensation reactions, a chain elongation to give geranyl diphosphate (GPP), a cyclopropanation to give CPP and a branching to give LPP. The sequence is that of Monoterpene synthase FDS-5, chloroplastic (FDS-5) from Artemisia spiciformis (Spiked big sagebrush).